Here is a 199-residue protein sequence, read N- to C-terminus: Fe/S biogenesis protein NfuA (199 aa).

2 residues coordinate [4Fe-4S] cluster: Cys-151 and Cys-154.

It belongs to the NfuA family. Homodimer. [4Fe-4S] cluster is required as a cofactor.

Involved in iron-sulfur cluster biogenesis. Binds a 4Fe-4S cluster, can transfer this cluster to apoproteins, and thereby intervenes in the maturation of Fe/S proteins. Could also act as a scaffold/chaperone for damaged Fe/S proteins. The sequence is that of Fe/S biogenesis protein NfuA from Xylella fastidiosa (strain M23).